The sequence spans 423 residues: Probable WRKY transcription factor 58 (423 aa).

Disordered regions lie at residues 91–128 (SSAHTGFIQPRQQSQPQPQRPDTFPHHMPPSTSVAVHG), 142–171 (RNHYNNPGNNNNNRSYNVVNVDKPADDGYN), and 215–284 (IYKG…GVST). Low complexity-rich tracts occupy residues 99–111 (QPRQQSQPQPQRP) and 144–162 (HYNNPGNNNNNRSYNVVNV). Residues 161 to 225 (NVDKPADDGY…YKGQHDHERP (65 aa)) constitute a DNA-binding region (WRKY 1). A compositionally biased stretch (acidic residues) spans 259–271 (DDDDDDDEDDEDL). A DNA-binding region (WRKY 2) is located at residues 300–365 (SEVDLLDDGY…YEGKHNHDVP (66 aa)).

It localises to the nucleus. Its function is as follows. Transcription factor. Interacts specifically with the W box (5'-(T)TGAC[CT]-3'), a frequently occurring elicitor-responsive cis-acting element. The sequence is that of Probable WRKY transcription factor 58 (WRKY58) from Arabidopsis thaliana (Mouse-ear cress).